The following is a 132-amino-acid chain: Iron-sulfur cluster assembly 1 homolog, mitochondrial (132 aa).

Residues Met1 to Ala15 constitute a mitochondrion transit peptide. Fe cation is bound by residues Cys60, Cys124, and Cys126.

This sequence belongs to the HesB/IscA family. As to quaternary structure, homooligomer, forming a rod-shaped structure 24 nm in length that may arise through a double-helical assembly of subunits. Interacts with CRY4; CRY4 seems to be associated with the outside of the rod-shaped homooligomer. Does not interact with CRY1 or CRY2. As to expression, detected in retina, especially in the retinal ganglion layer, the inner nuclear layer and the outer nuclear layer. Detected in retina visual pigment cells (at protein level).

It localises to the mitochondrion. Functionally, involved in the maturation of mitochondrial 4Fe-4S proteins functioning late in the iron-sulfur cluster assembly pathway. Probably involved in the binding of an intermediate of Fe/S cluster assembly. Component of a putative magnetoreceptor complex formed by ISCA1 and CRY4, a member of the cryptochrome family that are known to be required for light-dependent magnetosensitivity in various orgnisms. The rod-like assembly may facilitate the perception of the Earth's weak magnetic field. Both ISCA1 and the complex with CRY4 have magnetic properties and are attracted to iron beads. When exposed to a magnetic field of 1 mT (superior to the natural magnetic field), over 50% of the rod-like complexes align more or less in parallel with the magnetic field at room temperature. This chain is Iron-sulfur cluster assembly 1 homolog, mitochondrial (ISCA1), found in Columba livia (Rock dove).